A 222-amino-acid polypeptide reads, in one-letter code: Peroxisomal membrane protein 11-4 (222 aa).

Over methionine 1–glutamate 81 the chain is Cytoplasmic. Residues phenylalanine 82–phenylalanine 102 traverse the membrane as a helical segment. At threonine 103–proline 196 the chain is on the lumenal side. Residues phenylalanine 197–tyrosine 217 traverse the membrane as a helical segment. Topologically, residues arginine 218–serine 222 are cytoplasmic.

Belongs to the peroxin-11 family. As to expression, expressed in seedlings, shoots, leaf sheaths and flag leaf.

The protein localises to the peroxisome membrane. Involved in peroxisomal proliferation. The polypeptide is Peroxisomal membrane protein 11-4 (PEX11-4) (Oryza sativa subsp. indica (Rice)).